We begin with the raw amino-acid sequence, 160 residues long: Periplasmic nitrate reductase, electron transfer subunit (160 aa).

The signal sequence occupies residues 1–25; sequence MKTRIIFAALALAAAMPLLVSGVFA. Heme c contacts are provided by histidine 73, cysteine 87, cysteine 90, histidine 91, histidine 108, cysteine 127, cysteine 130, and histidine 131.

It belongs to the NapB family. As to quaternary structure, component of the periplasmic nitrate reductase NapAB complex composed of NapA and NapB. In terms of processing, binds 2 heme C groups per subunit.

It localises to the periplasm. In terms of biological role, electron transfer subunit of the periplasmic nitrate reductase complex NapAB. Receives electrons from the membrane-anchored tetraheme c-type NapC protein and transfers these to NapA subunit, thus allowing electron flow between membrane and periplasm. Essential for periplasmic nitrate reduction with nitrate as the terminal electron acceptor. This chain is Periplasmic nitrate reductase, electron transfer subunit, found in Azospirillum brasilense.